The sequence spans 77 residues: Defensin-like protein 161 (77 aa).

The first 27 residues, 1 to 27 (MAKLSCSYLLVFMLVFSAILMVEKVEG), serve as a signal peptide directing secretion. 4 cysteine pairs are disulfide-bonded: C30-C77, C40-C59, C45-C71, and C49-C73.

It belongs to the DEFL family.

It is found in the secreted. This Arabidopsis thaliana (Mouse-ear cress) protein is Defensin-like protein 161 (LCR27).